The following is a 235-amino-acid chain: Proteasome subunit alpha (235 aa).

This sequence belongs to the peptidase T1A family. The 20S proteasome core is composed of 14 alpha and 14 beta subunits that assemble into four stacked heptameric rings, resulting in a barrel-shaped structure. The two inner rings, each composed of seven catalytic beta subunits, are sandwiched by two outer rings, each composed of seven alpha subunits. The catalytic chamber with the active sites is on the inside of the barrel. Has a gated structure, the ends of the cylinder being occluded by the N-termini of the alpha-subunits. Is capped by the proteasome-associated ATPase, ARC.

It localises to the cytoplasm. Its pathway is protein degradation; proteasomal Pup-dependent pathway. With respect to regulation, the formation of the proteasomal ATPase ARC-20S proteasome complex, likely via the docking of the C-termini of ARC into the intersubunit pockets in the alpha-rings, may trigger opening of the gate for substrate entry. Interconversion between the open-gate and close-gate conformations leads to a dynamic regulation of the 20S proteasome proteolysis activity. Its function is as follows. Component of the proteasome core, a large protease complex with broad specificity involved in protein degradation. This Arthrobacter sp. (strain FB24) protein is Proteasome subunit alpha.